Here is a 1018-residue protein sequence, read N- to C-terminus: DNA polymerase gamma (1018 aa).

The protein belongs to the DNA polymerase type-A family. Mg(2+) is required as a cofactor.

The protein localises to the mitochondrion. The enzyme catalyses DNA(n) + a 2'-deoxyribonucleoside 5'-triphosphate = DNA(n+1) + diphosphate. Functionally, involved in the replication of mitochondrial DNA. This chain is DNA polymerase gamma (mip1), found in Schizosaccharomyces pombe (strain 972 / ATCC 24843) (Fission yeast).